We begin with the raw amino-acid sequence, 613 residues long: Dihydroxy-acid dehydratase (613 aa).

Position 81 (D81) interacts with Mg(2+). Position 122 (C122) interacts with [2Fe-2S] cluster. Mg(2+) is bound by residues D123 and K124. The residue at position 124 (K124) is an N6-carboxylysine. C195 provides a ligand contact to [2Fe-2S] cluster. E491 is a binding site for Mg(2+). The active-site Proton acceptor is the S517.

This sequence belongs to the IlvD/Edd family. In terms of assembly, homodimer. [2Fe-2S] cluster is required as a cofactor. Requires Mg(2+) as cofactor.

The enzyme catalyses (2R)-2,3-dihydroxy-3-methylbutanoate = 3-methyl-2-oxobutanoate + H2O. It carries out the reaction (2R,3R)-2,3-dihydroxy-3-methylpentanoate = (S)-3-methyl-2-oxopentanoate + H2O. It functions in the pathway amino-acid biosynthesis; L-isoleucine biosynthesis; L-isoleucine from 2-oxobutanoate: step 3/4. It participates in amino-acid biosynthesis; L-valine biosynthesis; L-valine from pyruvate: step 3/4. Functions in the biosynthesis of branched-chain amino acids. Catalyzes the dehydration of (2R,3R)-2,3-dihydroxy-3-methylpentanoate (2,3-dihydroxy-3-methylvalerate) into 2-oxo-3-methylpentanoate (2-oxo-3-methylvalerate) and of (2R)-2,3-dihydroxy-3-methylbutanoate (2,3-dihydroxyisovalerate) into 2-oxo-3-methylbutanoate (2-oxoisovalerate), the penultimate precursor to L-isoleucine and L-valine, respectively. In Vibrio atlanticus (strain LGP32) (Vibrio splendidus (strain Mel32)), this protein is Dihydroxy-acid dehydratase.